The following is a 170-amino-acid chain: Large ribosomal subunit protein uL10 (170 aa).

The protein belongs to the universal ribosomal protein uL10 family. In terms of assembly, part of the ribosomal stalk of the 50S ribosomal subunit. The N-terminus interacts with L11 and the large rRNA to form the base of the stalk. The C-terminus forms an elongated spine to which L12 dimers bind in a sequential fashion forming a multimeric L10(L12)X complex.

In terms of biological role, forms part of the ribosomal stalk, playing a central role in the interaction of the ribosome with GTP-bound translation factors. This Lactobacillus acidophilus (strain ATCC 700396 / NCK56 / N2 / NCFM) protein is Large ribosomal subunit protein uL10.